The primary structure comprises 180 residues: Segregation and condensation protein B (180 aa).

This sequence belongs to the ScpB family. In terms of assembly, homodimer. Homodimerization may be required to stabilize the binding of ScpA to the Smc head domains. Component of a cohesin-like complex composed of ScpA, ScpB and the Smc homodimer, in which ScpA and ScpB bind to the head domain of Smc. The presence of the three proteins is required for the association of the complex with DNA.

The protein localises to the cytoplasm. Participates in chromosomal partition during cell division. May act via the formation of a condensin-like complex containing Smc and ScpA that pull DNA away from mid-cell into both cell halves. The polypeptide is Segregation and condensation protein B (Staphylococcus aureus (strain MSSA476)).